Consider the following 262-residue polypeptide: Apolipoprotein A-Ia (262 aa).

The first 18 residues, 1-18, serve as a signal peptide directing secretion; it reads MKFVALALTLLLALGSQA. Residues 32 to 63 are 3 X approximate tandem repeats; it reads YKAAALVYLNQVKDQAEKALDNLDGTDYEQYK. 2 tandem repeats follow at residues 64-85 and 87-107. The interval 64–262 is 10 X approximate tandem repeats; sequence LQLSESLTKL…YETIAKAIQA (199 aa). One copy of the 3; half-length repeat lies at 108 to 118; sequence TDVEDLRSKLE. 5 tandem repeats follow at residues 119-140, 141-162, 163-184, 185-206, and 207-228. Residues 229–239 form a 9; half-length repeat; sequence PHTQDLQTRME. Repeat unit 10 spans residues 240-262; it reads PYMENVRTTFAQMYETIAKAIQA.

This sequence belongs to the apolipoprotein A1/A4/E family. Homodimer. Interacts with naxe and yjefn3.

Its subcellular location is the secreted. Its function is as follows. Participates in the reverse transport of cholesterol from tissues to the liver for excretion by promoting cholesterol efflux from tissues and by acting as a cofactor for the lecithin cholesterol acyltransferase (LCAT). The protein is Apolipoprotein A-Ia of Danio rerio (Zebrafish).